Here is a 65-residue protein sequence, read N- to C-terminus: Large ribosomal subunit protein bL32 (65 aa).

It belongs to the bacterial ribosomal protein bL32 family.

The polypeptide is Large ribosomal subunit protein bL32 (Metamycoplasma arthritidis (strain 158L3-1) (Mycoplasma arthritidis)).